The sequence spans 846 residues: Aminopeptidase N (846 aa).

Substrate contacts are provided by residues Glu-120 and 252–256 (GAMEN). His-288 lines the Zn(2+) pocket. The Proton acceptor role is filled by Glu-289. The Zn(2+) site is built by His-292 and Glu-311.

This sequence belongs to the peptidase M1 family. As to quaternary structure, monomer. It depends on Zn(2+) as a cofactor.

Its subcellular location is the cytoplasm. It carries out the reaction Release of an N-terminal amino acid, Xaa-|-Yaa- from a peptide, amide or arylamide. Xaa is preferably Ala, but may be most amino acids including Pro (slow action). When a terminal hydrophobic residue is followed by a prolyl residue, the two may be released as an intact Xaa-Pro dipeptide.. Aminopeptidase with broad substrate specificity to several peptides. It has more affinity for oligopeptides than for dipeptides. It plays an essential role in the metabolism, it may be involved in nitrogen supply or protein turnover. The chain is Aminopeptidase N (pepN) from Lactococcus lactis subsp. lactis (strain IL1403) (Streptococcus lactis).